Reading from the N-terminus, the 344-residue chain is N-acetyl-gamma-glutamyl-phosphate reductase (344 aa).

Cys-150 is a catalytic residue.

This sequence belongs to the NAGSA dehydrogenase family. Type 1 subfamily.

It is found in the cytoplasm. It carries out the reaction N-acetyl-L-glutamate 5-semialdehyde + phosphate + NADP(+) = N-acetyl-L-glutamyl 5-phosphate + NADPH + H(+). The protein operates within amino-acid biosynthesis; L-arginine biosynthesis; N(2)-acetyl-L-ornithine from L-glutamate: step 3/4. Catalyzes the NADPH-dependent reduction of N-acetyl-5-glutamyl phosphate to yield N-acetyl-L-glutamate 5-semialdehyde. The protein is N-acetyl-gamma-glutamyl-phosphate reductase of Pseudomonas savastanoi pv. phaseolicola (strain 1448A / Race 6) (Pseudomonas syringae pv. phaseolicola (strain 1448A / Race 6)).